A 726-amino-acid polypeptide reads, in one-letter code: Methionine--tRNA ligase (726 aa).

The 'HIGH' region motif lies at 12 to 22 (PYVNNIPHLGN). C143, C146, C155, and C158 together coordinate Zn(2+). Residues 330-334 (KFSKS) carry the 'KMSKS' region motif. An ATP-binding site is contributed by K333. Positions 562–667 (FSEQICLKTV…DNPIPGERVI (106 aa)) constitute a tRNA-binding domain.

It belongs to the class-I aminoacyl-tRNA synthetase family. MetG type 1 subfamily. Homodimer. It depends on Zn(2+) as a cofactor.

The protein localises to the cytoplasm. It carries out the reaction tRNA(Met) + L-methionine + ATP = L-methionyl-tRNA(Met) + AMP + diphosphate. Is required not only for elongation of protein synthesis but also for the initiation of all mRNA translation through initiator tRNA(fMet) aminoacylation. The chain is Methionine--tRNA ligase from Borrelia duttonii (strain Ly).